Consider the following 448-residue polypeptide: Nicotinate phosphoribosyltransferase pncB1 (448 aa).

The interval 1–21 (MGPPPAARRREGEPDNQDPAG) is disordered. The residue at position 212 (histidine 212) is a Phosphohistidine. The tract at residues 353–372 (RSSYKESPGGRKEALRRSRA) is disordered.

Belongs to the NAPRTase family. In terms of processing, transiently phosphorylated on a His residue during the reaction cycle. Phosphorylation strongly increases the affinity for substrates and increases the rate of nicotinate D-ribonucleotide production. Dephosphorylation regenerates the low-affinity form of the enzyme, leading to product release.

The catalysed reaction is nicotinate + 5-phospho-alpha-D-ribose 1-diphosphate + ATP + H2O = nicotinate beta-D-ribonucleotide + ADP + phosphate + diphosphate. It participates in cofactor biosynthesis; NAD(+) biosynthesis; nicotinate D-ribonucleotide from nicotinate: step 1/1. In terms of biological role, involved in the Preiss-Handler pathway, which is a recycling route that permits the salvage of free nicotinamide (NM) and nicotinic acid (Na) involved in the NAD biosynthesis. Catalyzes the synthesis of beta-nicotinate D-ribonucleotide from nicotinate and 5-phospho-D-ribose 1-phosphate at the expense of ATP. It is not able to use nicotinamide. PncB1 contributes to basal NAD level. The chain is Nicotinate phosphoribosyltransferase pncB1 (pncB1) from Mycobacterium tuberculosis (strain CDC 1551 / Oshkosh).